Consider the following 296-residue polypeptide: tRNA dimethylallyltransferase (296 aa).

Residue 2-9 (GPTASGKT) participates in ATP binding. 4–9 (TASGKT) serves as a coordination point for substrate. Interaction with substrate tRNA stretches follow at residues 27-30 (DSAL), 151-155 (QRLSR), and 232-237 (RCVGYR).

It belongs to the IPP transferase family. In terms of assembly, monomer. Mg(2+) serves as cofactor.

The enzyme catalyses adenosine(37) in tRNA + dimethylallyl diphosphate = N(6)-dimethylallyladenosine(37) in tRNA + diphosphate. In terms of biological role, catalyzes the transfer of a dimethylallyl group onto the adenine at position 37 in tRNAs that read codons beginning with uridine, leading to the formation of N6-(dimethylallyl)adenosine (i(6)A). The sequence is that of tRNA dimethylallyltransferase from Shewanella sp. (strain ANA-3).